The chain runs to 429 residues: Saccharopine dehydrogenase-like oxidoreductase (429 aa).

Ala2 is modified (N-acetylalanine). Ser217 carries the phosphoserine modification.

The protein belongs to the saccharopine dehydrogenase family.

In Bos taurus (Bovine), this protein is Saccharopine dehydrogenase-like oxidoreductase (SCCPDH).